A 502-amino-acid polypeptide reads, in one-letter code: Protein GIS3 (502 aa).

The protein localises to the cytoplasm. Its subcellular location is the nucleus. The sequence is that of Protein GIS3 (GIS3) from Saccharomyces cerevisiae (strain ATCC 204508 / S288c) (Baker's yeast).